The chain runs to 179 residues: Inner membrane-spanning protein YciB (179 aa).

Transmembrane regions (helical) follow at residues 22–42 (IYAA…YSWV), 50–70 (MALI…FFHN), 76–96 (WKVT…QWVM), 121–141 (LAWA…AFWL), and 149–169 (FKVF…GVYI).

It belongs to the YciB family.

The protein resides in the cell inner membrane. Plays a role in cell envelope biogenesis, maintenance of cell envelope integrity and membrane homeostasis. The sequence is that of Inner membrane-spanning protein YciB from Escherichia fergusonii (strain ATCC 35469 / DSM 13698 / CCUG 18766 / IAM 14443 / JCM 21226 / LMG 7866 / NBRC 102419 / NCTC 12128 / CDC 0568-73).